The chain runs to 428 residues: Cyclin-B1-1 (428 aa).

This sequence belongs to the cyclin family. Cyclin AB subfamily. In terms of assembly, interacts with FZR2/CCS52A1, FZR1/CCS52A2 and FZR3/CCS52B. Expressed in root tip, lateral root apex, shoot apex, leaf primordia, axillary buds, stamen and petal primordia, ovules and developing embryo.

It localises to the nucleus. The chain is Cyclin-B1-1 (CYCB1-1) from Arabidopsis thaliana (Mouse-ear cress).